The primary structure comprises 162 residues: 6,7-dimethyl-8-ribityllumazine synthase (162 aa).

5-amino-6-(D-ribitylamino)uracil is bound by residues phenylalanine 22, 56-58, and 80-82; these read TFE and AVI. 85 to 86 is a (2S)-2-hydroxy-3-oxobutyl phosphate binding site; the sequence is GT. The active-site Proton donor is histidine 88. Methionine 113 contacts 5-amino-6-(D-ribitylamino)uracil. Position 127 (arginine 127) interacts with (2S)-2-hydroxy-3-oxobutyl phosphate.

This sequence belongs to the DMRL synthase family.

It catalyses the reaction (2S)-2-hydroxy-3-oxobutyl phosphate + 5-amino-6-(D-ribitylamino)uracil = 6,7-dimethyl-8-(1-D-ribityl)lumazine + phosphate + 2 H2O + H(+). Its pathway is cofactor biosynthesis; riboflavin biosynthesis; riboflavin from 2-hydroxy-3-oxobutyl phosphate and 5-amino-6-(D-ribitylamino)uracil: step 1/2. Functionally, catalyzes the formation of 6,7-dimethyl-8-ribityllumazine by condensation of 5-amino-6-(D-ribitylamino)uracil with 3,4-dihydroxy-2-butanone 4-phosphate. This is the penultimate step in the biosynthesis of riboflavin. This chain is 6,7-dimethyl-8-ribityllumazine synthase, found in Anaeromyxobacter dehalogenans (strain 2CP-1 / ATCC BAA-258).